The sequence spans 1283 residues: Peroxisomal ATPase PEX1 (1283 aa).

The tract at residues Ser-346 to Gln-367 is disordered. A Phosphoserine modification is found at Ser-354. Over residues Pro-355–Gln-367 the composition is skewed to basic and acidic residues. ATP-binding positions include Gly-599–Ser-606 and Gly-881–Thr-888. A phosphoserine mark is found at Ser-1181, Ser-1209, and Ser-1211. Residues Phe-1260 to Ala-1283 are disordered.

The protein belongs to the AAA ATPase family. As to quaternary structure, homooligomer; homooligomerizes in the cytosol, interaction with PEX6 promotes dissociation of the homooligomer. Interacts with PEX6; forming the PEX1-PEX6 AAA ATPase complex, which is composed of a heterohexamer formed by a trimer of PEX1-PEX6 dimers. Interacts indirectly with PEX26, via its interaction with PEX6.

Its subcellular location is the cytoplasm. The protein resides in the cytosol. The protein localises to the peroxisome membrane. It catalyses the reaction ATP + H2O = ADP + phosphate + H(+). In terms of biological role, component of the PEX1-PEX6 AAA ATPase complex, a protein dislocase complex that mediates the ATP-dependent extraction of the PEX5 receptor from peroxisomal membranes, an essential step for PEX5 recycling. Specifically recognizes PEX5 monoubiquitinated at 'Cys-11', and pulls it out of the peroxisome lumen through the PEX2-PEX10-PEX12 retrotranslocation channel. Extraction by the PEX1-PEX6 AAA ATPase complex is accompanied by unfolding of the TPR repeats and release of bound cargo from PEX5. The chain is Peroxisomal ATPase PEX1 from Homo sapiens (Human).